The sequence spans 1904 residues: Voltage-dependent calcium channel type A subunit alpha-1 (1904 aa).

A disordered region spans residues 1-45 (MLGGVGGRHMSTRRRGSSPLVRGGAGLTGYAGPGASGNSNDVAAI). Over residues 23–35 (GGAGLTGYAGPGA) the composition is skewed to gly residues. The Cytoplasmic portion of the chain corresponds to 30-168 (YAGPGASGNS…KHTRFIIEWP (139 aa)). The I repeat unit spans residues 155 to 447 (NCIRKHTRFI…LVLGVLSGEF (293 aa)). The chain crosses the membrane as a helical span at residues 169 to 187 (PFEYAVLLTIIANCVVLAL). Residues 188–205 (EEHLPKQDKTILAQKLEA) are Extracellular-facing. Residues 206-225 (TEIYFLGIFCVEASLKILAL) form a helical membrane-spanning segment. The Cytoplasmic segment spans residues 226–237 (GFVLHRGSYLRN). The chain crosses the membrane as a helical span at residues 238-259 (IWNIMDFFVVVTGFITAFSQGI). Residues 260–264 (ELDMD) are Extracellular-facing. The helical transmembrane segment at 265 to 283 (LRTLRAIRVLRPLKLVSGI) threads the bilayer. Over 284-302 (PSLQVVLKSIIKAMAPLLQ) the chain is Cytoplasmic. A helical transmembrane segment spans residues 303-322 (IGLLVLFAIVIFAIIGLEFY). Over 323-419 (SGTLHKTCYS…WTNDALGSTY (97 aa)) the chain is Extracellular. N-linked (GlcNAc...) asparagine glycosylation is found at asparagine 353 and asparagine 367. Residues 420–444 (NWIYFIPLIVLGSFFMLNLVLGVLS) traverse the membrane as a helical segment. At 445 to 568 (GEFAKEREKV…YWIRKSVKSQ (124 aa)) the chain is on the cytoplasmic side. The interval 513–543 (KKLGKSKSTDTEEEEGDDDQDDGELSSSTKE) is disordered. A compositionally biased stretch (acidic residues) spans 523 to 536 (TEEEEGDDDQDDGE). Residues 554 to 797 (EKRFRYWIRK…VFLAIAVDNL (244 aa)) form an II repeat. The helical transmembrane segment at 569-587 (KFYWFVIVLVFFNTVCVAV) threads the bilayer. The Extracellular portion of the chain corresponds to 588 to 602 (EHYGQPQWLTDFLYF). A helical membrane pass occupies residues 603-622 (AEFVFLALFMLEMFIKVYAL). Residues 623 to 630 (GPRTYFDS) are Cytoplasmic-facing. A helical transmembrane segment spans residues 631 to 649 (SFNRFDCVVISGSIFEVIW). The Extracellular portion of the chain corresponds to 650-658 (SEVKSGSFG). Residues 659–677 (LSVLRALRLLRIFKVTKYW) traverse the membrane as a helical segment. Topologically, residues 678-696 (KSLRNLVISLLSSMRSIIS) are cytoplasmic. A helical transmembrane segment spans residues 697 to 716 (LLFLLFLFILIFALLGMQLF). Over 717-769 (GGQFNFDSGTPPTNFNTFPIALLTVFQILTGEDWNEVMYQGIESQGGHKKGMI) the chain is Extracellular. The chain crosses the membrane as a helical span at residues 770 to 794 (YSLYFIVLVLFGNYTLLNVFLAIAV). Topologically, residues 795–895 (DNLANAQELS…VRRAAHWVVN (101 aa)) are cytoplasmic. The interval 827–869 (QSLQNPKDGGAPKVEICPPNGKGGKQSSEEEKKQDEDDDTGPK) is disordered. An III repeat occupies 890–1177 (AHWVVNLRYF…IITFQEQGEA (288 aa)). A helical transmembrane segment spans residues 896 to 914 (LRYFDFFIMVVISLSSIAL). The Extracellular segment spans residues 915–930 (AAEDPVWEDSPRNEVL). The chain crosses the membrane as a helical span at residues 931-950 (NYFDYAFTGVFTVEMILKII). Residues 951-962 (DLGIILHPGSYL) are Cytoplasmic-facing. The chain crosses the membrane as a helical span at residues 963-981 (REFWNIMDAVVVICAAVSF). At 982–994 (AFDMTGSSAGQNL) the chain is on the extracellular side. N-linked (GlcNAc...) asparagine glycosylation is present at asparagine 993. Residues 995–1013 (STIKSLRVLRVLRPLKTIK) traverse the membrane as a helical segment. Topologically, residues 1014-1032 (RVPKLKAVFDCVVNSLKNV) are cytoplasmic. Residues 1033–1052 (INILIVYILFQFIFAVIAVQ) form a helical membrane-spanning segment. The Extracellular portion of the chain corresponds to 1053–1141 (LFNGKFFYCS…EDKGPIQNFR (89 aa)). A helical transmembrane segment spans residues 1142 to 1166 (IEMSIFYIVYFIVFPFFFVNIFVAL). At 1167–1221 (IIITFQEQGEAELQDGEIDKNQKSCIDFTIQARPLERYMPKERNSVKYKIWRIVV) the chain is on the cytoplasmic side. One copy of the IV repeat lies at 1214–1470 (YKIWRIVVST…DNFDYLTRDS (257 aa)). Residues 1222–1250 (STPFEYFIMGLIVLNTVLLMMKFHRQSDA) form a helical membrane-spanning segment. At 1251-1255 (YKNTL) the chain is on the extracellular side. Residues 1256–1275 (KYMNMCFTGMFTVECILKIA) traverse the membrane as a helical segment. The Cytoplasmic segment spans residues 1276–1283 (AFGVRNFF). A helical membrane pass occupies residues 1284-1302 (KDAWNTFDFITVIGSIVDA). Residues 1303–1309 (LVIEFGE) lie on the Extracellular side of the membrane. The helical transmembrane segment at 1310 to 1328 (NFINVGFLRLFRAARLIKL) threads the bilayer. Over 1329 to 1347 (LRQGYTIRILLWTFVQSFK) the chain is Cytoplasmic. The chain crosses the membrane as a helical span at residues 1348-1367 (ALPYVCLLIAMLFFIYAIIG). At 1368 to 1431 (MQVFGNIALD…AKAGKQEGGC (64 aa)) the chain is on the extracellular side. Residues 1430–1471 (GCGSNIAYAYFVSFIFFCSFLMLNLFVAVIMDNFDYLTRDSS) are phenylalkylamine binding. A helical membrane pass occupies residues 1432-1456 (GSNIAYAYFVSFIFFCSFLMLNLFV). At 1457 to 1904 (AVIMDNFDYL…HSDSDEDDWC (448 aa)) the chain is on the cytoplasmic side. One can recognise an EF-hand domain in the interval 1476 to 1511 (HHLDEFVRIWAEYDPNATGKIHYTEMYDMLKNMDPP). Residues aspartate 1489, asparagine 1491, threonine 1493, lysine 1495, and glutamate 1500 each contribute to the Ca(2+) site. 3 disordered regions span residues 1652 to 1694 (THTG…HEGP), 1710 to 1788 (THHP…HSYP), and 1870 to 1904 (GGRLLPSPVPNGYKPQPQAKQRTPRHSDSDEDDWC). Low complexity predominate over residues 1670 to 1681 (RSPSLRHSPGRP). Positions 1682–1691 (GYDHHGHYYH) are enriched in basic and acidic residues. Basic residues predominate over residues 1710–1725 (THHPHPSQYNHRHRMR). Residues 1727 to 1740 (PWSASTSPARTPSP) are compositionally biased toward low complexity. A compositionally biased stretch (polar residues) spans 1751 to 1762 (GTTSLEQRSRSP). Positions 1771 to 1784 (PHTHQHYHRHHPHQ) are enriched in basic residues.

The protein belongs to the calcium channel alpha-1 subunit (TC 1.A.1.11) family. CACNA1I subfamily. Interacts with CATSPER1 and CATSPER2, leading to suppress T-type calcium channel activity.

It localises to the membrane. Voltage-sensitive calcium channels (VSCC) mediate the entry of calcium ions into excitable cells and are also involved in a variety of calcium-dependent processes, including muscle contraction, neurotransmitter release, gene expression, cell motility, cell division and cell death. In Apis mellifera (Honeybee), this protein is Voltage-dependent calcium channel type A subunit alpha-1 (CAC).